The following is a 1101-amino-acid chain: Lysylphosphatidylglycerol biosynthesis bifunctional protein LysX (1101 aa).

The segment at 1-601 (MTATRLVRAH…RLHSDGTAPD (601 aa)) is phosphatidylglycerol lysyltransferase. The next 7 membrane-spanning stretches (helical) occupy residues 18-38 (VPAA…LASV), 60-80 (FPDT…ALAA), 84-104 (IAWW…VTGL), 113-133 (DVGE…LLLA), 151-171 (VTLV…LELF), 183-200 (YALN…GAFS), and 207-227 (VNAL…VVLF). The interval 602–1101 (RIGPVGDGAD…TLPFPLAKPR (500 aa)) is lysine--tRNA ligase. Residues 662–740 (VTVSGRVLRA…SVLVTRWRLI (79 aa)) constitute a DNA-binding region (OB). Aspartate 1013 and glutamate 1020 together coordinate Mg(2+).

It in the N-terminal section; belongs to the LPG synthetase family. This sequence in the C-terminal section; belongs to the class-II aminoacyl-tRNA synthetase family. Mg(2+) is required as a cofactor.

It localises to the cell membrane. The enzyme catalyses tRNA(Lys) + L-lysine + ATP = L-lysyl-tRNA(Lys) + AMP + diphosphate. It carries out the reaction L-lysyl-tRNA(Lys) + a 1,2-diacyl-sn-glycero-3-phospho-(1'-sn-glycerol) = a 1,2-diacyl-sn-glycero-3-phospho-1'-(3'-O-L-lysyl)-sn-glycerol + tRNA(Lys). Functionally, catalyzes the production of L-lysyl-tRNA(Lys)transfer and the transfer of a lysyl group from L-lysyl-tRNA(Lys) to membrane-bound phosphatidylglycerol (PG), which produces lysylphosphatidylglycerol (LPG), one of the components of the bacterial membrane with a positive net charge. LPG synthesis contributes to the resistance to cationic antimicrobial peptides (CAMPs) and likely protects M.tuberculosis against the CAMPs produced by competiting microorganisms (bacteriocins). In fact, the modification of anionic phosphatidylglycerol with positively charged L-lysine results in repulsion of the peptides. This chain is Lysylphosphatidylglycerol biosynthesis bifunctional protein LysX (lysX), found in Mycolicibacterium gilvum (strain PYR-GCK) (Mycobacterium gilvum (strain PYR-GCK)).